The sequence spans 50 residues: Large ribosomal subunit protein eL39 (50 aa).

The protein belongs to the eukaryotic ribosomal protein eL39 family.

This Archaeoglobus fulgidus (strain ATCC 49558 / DSM 4304 / JCM 9628 / NBRC 100126 / VC-16) protein is Large ribosomal subunit protein eL39 (rpl39e).